A 275-amino-acid polypeptide reads, in one-letter code: MTRKVAIYGKGGIGKSTTTQNTAAALAYFHDKKVFTHGCDPKADSTRLILGGKPEETLMDMVRDKGAEKITNDDVIKKGFLDIQCVESGGPEPGVGCAGRGVITAIDLMEENGAYTDDLDFVFFDDLGDVVCGGFAMPIRDGKAQEVYIVASGEMMAIYAANNICKGLVKYAKQSAVGLGGIICNSRKVDGERESVEEFTAAIGTKMIHFVPRDNIVQKAEFNKKTVTEFAPEENQAKEYGELARKIIENDEFVIPKPLTMDQLEDMVVKYGIAD.

An ATP-binding site is contributed by 9-16 (GKGGIGKS). [4Fe-4S] cluster is bound at residue cysteine 97. Arginine 100 carries the ADP-ribosylarginine; by dinitrogenase reductase ADP-ribosyltransferase modification. Cysteine 132 contributes to the [4Fe-4S] cluster binding site.

It belongs to the NifH/BchL/ChlL family. As to quaternary structure, homodimer. The cofactor is [4Fe-4S] cluster. Post-translationally, the reversible ADP-ribosylation of Arg-100 inactivates the nitrogenase reductase and regulates nitrogenase activity.

The enzyme catalyses N2 + 8 reduced [2Fe-2S]-[ferredoxin] + 16 ATP + 16 H2O = H2 + 8 oxidized [2Fe-2S]-[ferredoxin] + 2 NH4(+) + 16 ADP + 16 phosphate + 6 H(+). Functionally, the key enzymatic reactions in nitrogen fixation are catalyzed by the nitrogenase complex, which has 2 components: the iron protein (component 2) and a component 1 which is either a molybdenum-iron protein, a vanadium-iron, or an iron-iron protein. This Azotobacter vinelandii protein is Nitrogenase iron protein 3 (anfH).